The primary structure comprises 348 residues: MEVFDVTIVGGGPAGLYSAFYSGLREMKTKIIDYQAELGGKVHIYPEKVIWDIGGLTPMSGENVIKQMVEQAMTFDPTVVLNEKVESIDKNEMGLFQLHTASGEIHYSKTIIVAVGGGILHPKRLNLEGAEKYEVTNLNYKITSLQRYKDKRVIISGGGNSAVDWANELVDIAKSVYLTYRKDVLSGHEAQVTKLMKSSAECYFNCSITKLISENNQSIEHVELTNHESGDILALPIDEVIINHGYDRDIDLLDNSPSLGVEIKDGYFVAGSPNSESSVPGIYAAGDILHHEGKLHLIAGAFQDAANAVNQAKKYIDPMANNFAMVSSHNEMFKERNEKLKASAAASV.

Aspartate 33, lysine 41, tyrosine 45, valine 85, leucine 120, aspartate 287, and serine 328 together coordinate FAD.

Belongs to the ferredoxin--NADP reductase type 2 family. As to quaternary structure, homodimer. It depends on FAD as a cofactor.

The enzyme catalyses 2 reduced [2Fe-2S]-[ferredoxin] + NADP(+) + H(+) = 2 oxidized [2Fe-2S]-[ferredoxin] + NADPH. The protein is Ferredoxin--NADP reductase 1 of Oceanobacillus iheyensis (strain DSM 14371 / CIP 107618 / JCM 11309 / KCTC 3954 / HTE831).